The following is a 215-amino-acid chain: Small ribosomal subunit protein uS7 (215 aa).

It belongs to the universal ribosomal protein uS7 family. Part of the 30S ribosomal subunit.

One of the primary rRNA binding proteins, it binds directly to 16S rRNA where it nucleates assembly of the head domain of the 30S subunit. Is located at the subunit interface close to the decoding center. This chain is Small ribosomal subunit protein uS7, found in Thermococcus gammatolerans (strain DSM 15229 / JCM 11827 / EJ3).